The primary structure comprises 570 residues: Periplasmic trehalase (570 aa).

Positions 1–34 (MIPPEIRRSVLLQKAIKLALAGTLLTFASFSATA) are cleaved as a signal peptide. Residues R159, 166 to 167 (WD), N203, 212 to 214 (RSQ), 284 to 286 (RPE), and G317 each bind substrate. Active-site proton donor/acceptor residues include D319 and E503. E518 is a binding site for substrate. The interval 544–570 (KPCDSVPSTRPASLSATPTKTPSAATQ) is disordered. Over residues 554–570 (PASLSATPTKTPSAATQ) the composition is skewed to low complexity.

This sequence belongs to the glycosyl hydrolase 37 family. In terms of assembly, monomer.

The protein localises to the periplasm. It carries out the reaction alpha,alpha-trehalose + H2O = alpha-D-glucose + beta-D-glucose. In terms of biological role, provides the cells with the ability to utilize trehalose at high osmolarity by splitting it into glucose molecules that can subsequently be taken up by the phosphotransferase-mediated uptake system. The chain is Periplasmic trehalase from Salmonella schwarzengrund (strain CVM19633).